The following is a 421-amino-acid chain: ATP-dependent RNA helicase RhlB (421 aa).

Residues 9–37 carry the Q motif motif; it reads QKFSDFALHPKVVEALEKKGFHNCTPIQA. Residues 40 to 219 enclose the Helicase ATP-binding domain; it reads LPLTLAGRDV…FEQMNNAEYI (180 aa). 53 to 60 lines the ATP pocket; the sequence is AQTGTGKT. Residues 165 to 168 carry the DEAD box motif; sequence DEAD. Positions 245-390 constitute a Helicase C-terminal domain; the sequence is RLLQTLIEEE…VSKYNPDALM (146 aa). Residues 392–421 are disordered; that stretch reads DLPKPLRLTRPRTGNGPRRTGAPRNRRRSG. Residues 402–414 are compositionally biased toward low complexity; that stretch reads PRTGNGPRRTGAP.

The protein belongs to the DEAD box helicase family. RhlB subfamily. As to quaternary structure, component of the RNA degradosome, which is a multiprotein complex involved in RNA processing and mRNA degradation.

It is found in the cytoplasm. The enzyme catalyses ATP + H2O = ADP + phosphate + H(+). In terms of biological role, DEAD-box RNA helicase involved in RNA degradation. Has RNA-dependent ATPase activity and unwinds double-stranded RNA. In Escherichia coli O157:H7 (strain EC4115 / EHEC), this protein is ATP-dependent RNA helicase RhlB.